The primary structure comprises 87 residues: Acyl-CoA-binding protein (87 aa).

Residues 2–87 (VSQLFEEKAK…VDQLIAKYSS (86 aa)) enclose the ACB domain. Residues 29 to 33 (YALYK), Lys-51, and Lys-55 each bind an acyl-CoA. Lys-51 is covalently cross-linked (Glycyl lysine isopeptide (Lys-Gly) (interchain with G-Cter in ubiquitin)). Lys-72 is covalently cross-linked (Glycyl lysine isopeptide (Lys-Gly) (interchain with G-Cter in ubiquitin)). An acyl-CoA is bound at residue Tyr-74.

Belongs to the ACBP family.

Functionally, binds medium- and long-chain acyl-CoA esters with very high affinity and may function as an intracellular carrier of acyl-CoA esters. Enhances the in vitro activity of the ceramide synthase complex. In Saccharomyces cerevisiae (strain ATCC 204508 / S288c) (Baker's yeast), this protein is Acyl-CoA-binding protein (ACB1).